The following is a 347-amino-acid chain: 3-isopropylmalate dehydrogenase (347 aa).

Substrate-binding residues include arginine 94, arginine 104, arginine 128, and aspartate 219. Residues aspartate 219, aspartate 243, and aspartate 247 each coordinate Mg(2+). 279–291 (GSAPDIAGQGKAD) is a binding site for NAD(+).

Belongs to the isocitrate and isopropylmalate dehydrogenases family. LeuB type 2 subfamily. In terms of assembly, homodimer. Requires Mg(2+) as cofactor. It depends on Mn(2+) as a cofactor.

It localises to the cytoplasm. The catalysed reaction is (2R,3S)-3-isopropylmalate + NAD(+) = 4-methyl-2-oxopentanoate + CO2 + NADH. It functions in the pathway amino-acid biosynthesis; L-leucine biosynthesis; L-leucine from 3-methyl-2-oxobutanoate: step 3/4. Catalyzes the oxidation of 3-carboxy-2-hydroxy-4-methylpentanoate (3-isopropylmalate) to 3-carboxy-4-methyl-2-oxopentanoate. The product decarboxylates to 4-methyl-2 oxopentanoate. In Streptomyces coelicolor (strain ATCC BAA-471 / A3(2) / M145), this protein is 3-isopropylmalate dehydrogenase.